Consider the following 477-residue polypeptide: Dihydrolipoyl dehydrogenase 3 (477 aa).

FAD is bound by residues 39–47 (EKGEYGGAC), K56, and A118. A disulfide bond links C47 and C52. Residues 186–190 (GAGYI), E209, and 279–282 (AVGR) contribute to the NAD(+) site. The FAD site is built by D322 and A330. H454 functions as the Proton acceptor in the catalytic mechanism.

The protein belongs to the class-I pyridine nucleotide-disulfide oxidoreductase family. As to quaternary structure, homodimer. Requires FAD as cofactor.

Its subcellular location is the cytoplasm. The catalysed reaction is N(6)-[(R)-dihydrolipoyl]-L-lysyl-[protein] + NAD(+) = N(6)-[(R)-lipoyl]-L-lysyl-[protein] + NADH + H(+). The chain is Dihydrolipoyl dehydrogenase 3 (lpdA3) from Haloarcula marismortui (strain ATCC 43049 / DSM 3752 / JCM 8966 / VKM B-1809) (Halobacterium marismortui).